Here is a 317-residue protein sequence, read N- to C-terminus: MQPIDELIERLKKGDRRAVAKLITLVENDESKAKVIIKKIYPLTGNAHIVGITGPPGAGKSTLLDKLIKEARREGLIVGVIAVDPTSPFTGGALLGDRIRMQRHSTDPGVFIRSMATRGSLGGLSKATNDAIKILDAYGCDVIFVETVGVGQIEVDIVKTADTVVLVTIPGLGDDVQTIKAGLMEIADIFVVNKADREGADITYFELTLALDLEKEKWEKIGWKPPIIETVGTTGKGVKELWEKIKEHKKFLEESGKLAEKRRTRIEEEVKTIIAGIVAKKVEASLSEFEDIISMVLNKDLDPYSAADLVLEKIVGR.

GTP-binding positions include 54–62 (GPPGAGKST), Asp196, and 231–233 (VGT).

This sequence belongs to the SIMIBI class G3E GTPase family. ArgK/MeaB subfamily.

Its function is as follows. May have GTPase activity. May also bind and hydrolyze ATP. May function as chaperone. This chain is Putative GTPase PH0274, found in Pyrococcus horikoshii (strain ATCC 700860 / DSM 12428 / JCM 9974 / NBRC 100139 / OT-3).